The sequence spans 221 residues: Glutathione S-transferase Z1 (221 aa).

One can recognise a GST N-terminal domain in the interval 7-88 (EKLKLYSYWR…YLDEKYPEPP (82 aa)). Glutathione-binding positions include 17–18 (SS), 17–22 (SSCAHR), Gln-46, 46–47 (QF), 59–60 (TV), Val-60, 72–73 (DS), Gln-112, and 116–118 (NLA). One can recognise a GST C-terminal domain in the interval 93–218 (DLHKRAVNYQ…LPEKQPDAPS (126 aa)).

This sequence belongs to the GST superfamily. Zeta family. In terms of assembly, homodimer.

It is found in the cytoplasm. The protein resides in the cytosol. It catalyses the reaction RX + glutathione = an S-substituted glutathione + a halide anion + H(+). Acts a maleylacetone isomerase. Also catalyzes the glutathione-dependent dehalogenation of dichloroacetic acid to glyoxylic acid. In vitro, possesses glutathione peroxidase activity toward cumene hydroperoxide and linoleic acid-13-hydroperoxide. The chain is Glutathione S-transferase Z1 (GSTZ1) from Arabidopsis thaliana (Mouse-ear cress).